A 634-amino-acid polypeptide reads, in one-letter code: tRNA uridine 5-carboxymethylaminomethyl modification enzyme MnmG (634 aa).

FAD is bound at residue 14–19 (GGGHAG). 279–293 (GPRYCPSIEDKVVRF) is an NAD(+) binding site.

The protein belongs to the MnmG family. In terms of assembly, homodimer. Heterotetramer of two MnmE and two MnmG subunits. FAD is required as a cofactor.

Its subcellular location is the cytoplasm. Its function is as follows. NAD-binding protein involved in the addition of a carboxymethylaminomethyl (cmnm) group at the wobble position (U34) of certain tRNAs, forming tRNA-cmnm(5)s(2)U34. The polypeptide is tRNA uridine 5-carboxymethylaminomethyl modification enzyme MnmG (Xanthomonas oryzae pv. oryzae (strain KACC10331 / KXO85)).